Reading from the N-terminus, the 146-residue chain is Ecotin-like protein 1 (146 aa).

It belongs to the protease inhibitor I11 (ecotin) family.

This chain is Ecotin-like protein 1 (ISP1), found in Leishmania braziliensis.